We begin with the raw amino-acid sequence, 108 residues long: MRKKFKRQEYARYKKLGEKWRRPRGRTSKMRRYEKGKPAMPAIGYRKPSEVRGLHPSGYEDVLVSNMRELEALDPEKQAARIASAVGARKKTLMLEKARELGIKVLNP.

A compositionally biased stretch (basic residues) spans 21-30 (RRPRGRTSKM). Residues 21–44 (RRPRGRTSKMRRYEKGKPAMPAIG) form a disordered region.

This sequence belongs to the eukaryotic ribosomal protein eL32 family.

The sequence is that of Large ribosomal subunit protein eL32 (rpl32e) from Methanothermobacter thermautotrophicus (strain ATCC 29096 / DSM 1053 / JCM 10044 / NBRC 100330 / Delta H) (Methanobacterium thermoautotrophicum).